We begin with the raw amino-acid sequence, 282 residues long: 4-diphosphocytidyl-2-C-methyl-D-erythritol kinase (282 aa).

Residue K12 is part of the active site. 95 to 105 contributes to the ATP binding site; sequence PMGGGIGGGSS. D137 is an active-site residue.

It belongs to the GHMP kinase family. IspE subfamily.

It catalyses the reaction 4-CDP-2-C-methyl-D-erythritol + ATP = 4-CDP-2-C-methyl-D-erythritol 2-phosphate + ADP + H(+). It functions in the pathway isoprenoid biosynthesis; isopentenyl diphosphate biosynthesis via DXP pathway; isopentenyl diphosphate from 1-deoxy-D-xylulose 5-phosphate: step 3/6. In terms of biological role, catalyzes the phosphorylation of the position 2 hydroxy group of 4-diphosphocytidyl-2C-methyl-D-erythritol. The protein is 4-diphosphocytidyl-2-C-methyl-D-erythritol kinase of Pseudomonas aeruginosa (strain UCBPP-PA14).